The sequence spans 562 residues: Exonuclease subunit 2 (562 aa).

36–43 (GKNGGGKS) contacts ATP.

The protein to phage T5 protein D13 and to yeast RAD52. Consists of two subunits: Gp47 and Gp46.

Functionally, exonuclease involved in phage DNA recombination, replication, and repair. The polypeptide is Exonuclease subunit 2 (46) (Escherichia phage RB69 (Bacteriophage RB69)).